Reading from the N-terminus, the 380-residue chain is Gonadotropin-releasing hormone II receptor (380 aa).

Over 1–40 (MSAVNGTPWGSSAREEVWAGSGVEVEGSELPTFSTAAKVR) the chain is Extracellular. Residues 41 to 60 (VGVTIVLFVSSAGGNLAVLW) traverse the membrane as a helical segment. Over 61–76 (SVTRPQPSQLRPSPVR) the chain is Cytoplasmic. Residues 77-96 (RLFAHLAAADLLVTFVVMPL) traverse the membrane as a helical segment. Topologically, residues 97–114 (DATWNITVQWLAGDIACR) are extracellular. N-linked (GlcNAc...) asparagine glycosylation is present at asparagine 101. The cysteines at positions 113 and 188 are disulfide-linked. The helical transmembrane segment at 115-136 (TLMFLKLMAMYAAAFLPVVIGL) threads the bilayer. At 137–160 (DRQAAVLNPLGSRSGVRKLLGAAW) the chain is on the cytoplasmic side. A helical transmembrane segment spans residues 161–178 (GLSFLLALPQLFLFHTVH). The Extracellular segment spans residues 179-204 (RAGPVPFTQCATKGSFKARWQETTYN). A helical membrane pass occupies residues 205–224 (LFTFCCLFLLPLTAMAICYS). At 225–278 (RIVLGVSSPRTRKGSHAPAGEFALRRSFDNRPRVRLRALRLALLVLLTFILCWT) the chain is on the cytoplasmic side. Residues 279 to 297 (PYYLLGLWYWFSPSMLSEV) traverse the membrane as a helical segment. Residues 298–303 (PPSLSH) lie on the Extracellular side of the membrane. The chain crosses the membrane as a helical span at residues 304 to 323 (ILFLFGLLNAPLDPLLYGAF). Over 324 to 380 (TLGCRRGHQELSMDSSREEGSRRMFQQDIQALRQTEVQKTVTSRKAGETKDIPITSI) the chain is Cytoplasmic.

The protein belongs to the G-protein coupled receptor 1 family. Post-translationally, phosphorylated on the C-terminal cytoplasmic tail.

It localises to the cell membrane. Its function is as follows. Receptor for gonadotropin releasing hormone II (GnRH II). This receptor mediates its action by association with G proteins that activate a phosphatidylinositol-calcium second messenger system. In Callithrix jacchus (White-tufted-ear marmoset), this protein is Gonadotropin-releasing hormone II receptor (GNRHR2).